We begin with the raw amino-acid sequence, 337 residues long: GTPase Obg (337 aa).

The Obg domain maps to 1–159 (MKFVDSASIF…LMLNMELKLM (159 aa)). The region spanning 160-323 (ADVGLVGFPN…LKDELWREVS (164 aa)) is the OBG-type G domain. Residues 166 to 173 (GFPNAGKS), 191 to 195 (FTTLV), 213 to 216 (DIPG), 280 to 283 (TKMD), and 304 to 306 (SAV) each bind GTP. Positions 173 and 193 each coordinate Mg(2+).

Belongs to the TRAFAC class OBG-HflX-like GTPase superfamily. OBG GTPase family. In terms of assembly, monomer. The cofactor is Mg(2+).

The protein localises to the cytoplasm. In terms of biological role, an essential GTPase which binds GTP, GDP and possibly (p)ppGpp with moderate affinity, with high nucleotide exchange rates and a fairly low GTP hydrolysis rate. Plays a role in control of the cell cycle, stress response, ribosome biogenesis and in those bacteria that undergo differentiation, in morphogenesis control. This chain is GTPase Obg, found in Pelodictyon phaeoclathratiforme (strain DSM 5477 / BU-1).